Consider the following 101-residue polypeptide: Putative defensin-like protein 307 (101 aa).

Positions 1 to 22 (MEKSALIFIGILLFSTCTSIMA) are cleaved as a signal peptide. 3 disulfide bridges follow: C29/C49, C35/C54, and C40/C56.

The protein belongs to the DEFL family.

The protein resides in the secreted. This is Putative defensin-like protein 307 from Arabidopsis thaliana (Mouse-ear cress).